Reading from the N-terminus, the 129-residue chain is Natriuretic peptides B (129 aa).

A signal peptide spans 1–26 (MDPQTALSRALLLLLFLHLSLLGCRS). The cysteines at positions 107 and 123 are disulfide-linked.

This sequence belongs to the natriuretic peptide family. The precursor molecule is proteolytically cleaved, possibly by FURIN or CORIN, to produce the active peptide. May undergo further proteolytic cleavage by various proteases such as DPP4, MME and possibly FAP, to give rise to a variety of shorter peptides. May be cleaved at Pro-99 by the prolyl endopeptidase FAP (seprase) activity (in vitro). May be degraded by IDE. During IDE degradation, the resulting products initially increase the activation of NPR1 and can also stimulate NPR2 to produce cGMP before the fragments are completely degraded and inactivated by IDE (in vitro).

It localises to the secreted. In terms of biological role, cardiac hormone that plays a key role in mediating cardio-renal homeostasis. May also function as a paracrine antifibrotic factor in the heart. Acts by specifically binding and stimulating NPR1 to produce cGMP, which in turn activates effector proteins that drive various biological responses. Involved in regulating the extracellular fluid volume and maintaining the fluid-electrolyte balance through natriuresis, diuresis, vasorelaxation, and inhibition of renin and aldosterone secretion. Binds the clearance receptor NPR3. This is Natriuretic peptides B (NPPB) from Bos taurus (Bovine).